The primary structure comprises 355 residues: Chromosomal protein D1 (355 aa).

Met1 bears the N-acetylmethionine mark. Residues 1 to 355 (MEEVAVKKRG…NYNDSESVAA (355 aa)) form a disordered region. Positions 7–14 (KKRGRPSK) form a DNA-binding region, a.T hook 1. Phosphoserine is present on Ser30. 2 consecutive DNA-binding regions (a.T hook) follow at residues 34 to 41 (KKRGRPAK) and 60 to 67 (KIQNDEDP). Acidic residues predominate over residues 64-77 (DEDPEDEGEEDGDG). Phosphoserine occurs at positions 80, 88, and 89. The a.T hook 4 DNA-binding region spans 94-101 (KGRGRPKS). A phosphoserine mark is found at Ser107, Ser109, and Ser112. Position 115 is a phosphothreonine (Thr115). Ser118 carries the phosphoserine modification. A compositionally biased stretch (basic residues) spans 119–130 (AKKRKAGRPKKH). Positions 122-129 (RKAGRPKK) form a DNA-binding region, a.T hook 5. 2 positions are modified to phosphoserine; by CK2: Ser133 and Ser135. Positions 135–147 (SENEDDQDEDDDG) are enriched in acidic residues. Phosphoserine is present on residues Ser149, Ser150, Ser161, Ser164, and Ser170. The a.T hook 6 DNA-binding region spans 155–162 (RPVGRPSA). A DNA-binding region (a.T hook 7) is located at residues 174 to 181 (RGLGRPKK). The residue at position 186 (Ser186) is a Phosphoserine; by CK2. The a.T hook 8 DNA-binding region spans 196–203 (KKRGRPPQ). At Ser208 the chain carries Phosphoserine. The a.T hook 9 DNA-binding region spans 219-226 (RPRGRPKA). The segment covering 237 to 247 (NDDDQDDENSG) has biased composition (acidic residues). Phosphoserine is present on residues Ser246, Ser252, and Ser253. 2 DNA-binding regions (a.T hook) span residues 262–269 (KKRGRPSL) and 281–288 (KPRSRPAK). 2 positions are modified to phosphoserine: Ser299 and Ser307. Positions 307 to 318 (SKKESNDEDRAV) are enriched in basic and acidic residues. At Ser311 the chain carries Phosphoserine; by CK2. Thr321 is subject to Phosphothreonine. Ser332 is modified (phosphoserine; by CK2). Residues 345-355 (DNYNDSESVAA) are compositionally biased toward polar residues.

The protein localises to the nucleus. It localises to the chromosome. Functionally, this satellite DNA-associated protein is a double-stranded DNA binding protein specific for tracts of pure at DNA. It may play a role in organizing the higher-order structure of euchromatin as well as heterochromatin. The sequence is that of Chromosomal protein D1 (D1) from Drosophila melanogaster (Fruit fly).